The primary structure comprises 555 residues: CTP synthase (555 aa).

Residues 1–277 (MPKEPETEYD…DQHVMERLNV (277 aa)) form an amidoligase domain region. Ser26 contributes to the CTP binding site. UTP is bound at residue Ser26. 27–32 (GLGKGI) is a binding site for ATP. Tyr67 serves as a coordination point for L-glutamine. Asp84 lines the ATP pocket. The Mg(2+) site is built by Asp84 and Glu152. CTP-binding positions include 159-161 (DIE), 198-203 (KTKPTQ), and Lys234. UTP is bound by residues 198-203 (KTKPTQ) and Lys234. One can recognise a Glutamine amidotransferase type-1 domain in the interval 307–542 (LVGKYDLEDA…LKSVDSTLDA (236 aa)). Gly364 contacts L-glutamine. The Nucleophile; for glutamine hydrolysis role is filled by Cys391. L-glutamine-binding positions include 392–395 (LGFQ), Glu415, and Arg472. Residues His515 and Glu517 contribute to the active site.

Belongs to the CTP synthase family. As to quaternary structure, homotetramer.

The enzyme catalyses UTP + L-glutamine + ATP + H2O = CTP + L-glutamate + ADP + phosphate + 2 H(+). It catalyses the reaction L-glutamine + H2O = L-glutamate + NH4(+). The catalysed reaction is UTP + NH4(+) + ATP = CTP + ADP + phosphate + 2 H(+). It participates in pyrimidine metabolism; CTP biosynthesis via de novo pathway; CTP from UDP: step 2/2. Its activity is regulated as follows. Allosterically activated by GTP, when glutamine is the substrate; GTP has no effect on the reaction when ammonia is the substrate. The allosteric effector GTP functions by stabilizing the protein conformation that binds the tetrahedral intermediate(s) formed during glutamine hydrolysis. Inhibited by the product CTP, via allosteric rather than competitive inhibition. Functionally, catalyzes the ATP-dependent amination of UTP to CTP with either L-glutamine or ammonia as the source of nitrogen. Regulates intracellular CTP levels through interactions with the four ribonucleotide triphosphates. The sequence is that of CTP synthase from Haloquadratum walsbyi (strain DSM 16790 / HBSQ001).